A 1291-amino-acid chain; its full sequence is MPITINNFNYSDPVDNKNILYLDTHLNTLANEPEKAFRITGNIWVIPDRFSRNSNPNLNKPPRVTSPKSGYYDPNYLSTDSDKDTFLKEIIKLFKRINSREIGEELIYRLSTDIPFPGNNNTPINTFDFDVDFNSVDVKTRQGNNWVKTGSINPSVIITGPRENIIDPETSTFKLTNNTFAAQEGFGALSIISISPRFMLTYSNATNDVGEGRFSKSEFCMDPILILMHELNHAMHNLYGIAIPNDQTISSVTSNIFYSQYNVKLEYAEIYAFGGPTIDLIPKSARKYFEEKALDYYRSIAKRLNSITTANPSSFNKYIGEYKQKLIRKYRFVVESSGEVTVNRNKFVELYNELTQIFTEFNYAKIYNVQNRKIYLSNVYTPVTANILDDNVYDIQNGFNIPKSNLNVLFMGQNLSRNPALRKVNPENMLYLFTKFCHKAIDGRSLYNKTLDCRELLVKNTDLPFIGDISDVKTDIFLRKDINEETEVIYYPDNVSVDQVILSKNTSEHGQLDLLYPSIDSESEILPGENQVFYDNRTQNVDYLNSYYYLESQKLSDNVEDFTFTRSIEEALDNSAKVYTYFPTLANKVNAGVQGGLFLMWANDVVEDFTTNILRKDTLDKISDVSAIIPYIGPALNISNSVRRGNFTEAFAVTGVTILLEAFPEFTIPALGAFVIYSKVQERNEIIKTIDNCLEQRIKRWKDSYEWMMGTWLSRIITQFNNISYQMYDSLNYQAGAIKAKIDLEYKKYSGSDKENIKSQVENLKNSLDVKISEAMNNINKFIRECSVTYLFKNMLPKVIDELNEFDRNTKAKLINLIDSHNIILVGEVDKLKAKVNNSFQNTIPFNIFSYTNNSLLKDIINEYFNNINDSKILSLQNRKNTLVDTSGYNAEVSEEGDVQLNPIFPFDFKLGSSGEDRGKVIVTQNENIVYNSMYESFSISFWIRINKWVSNLPGYTIIDSVKNNSGWSIGIISNFLVFTLKQNEDSEQSINFSYDISNNAPGYNKWFFVTVTNNMMGNMKIYINGKLIDTIKVKELTGINFSKTITFEINKIPDTGLITSDSDNINMWIRDFYIFAKELDGKDINILFNSLQYTNVVKDYWGNDLRYNKEYYMVNIDYLNRYMYANSRQIVFNTRRNNNDFNEGYKIIIKRIRGNTNDTRVRGGDILYFDMTINNKAYNLFMKNETMYADNHSTEDIYAIGLREQTKDINDNIIFQIQPMNNTYYYASQIFKSNFNGENISGICSIGTYRFRLGGDWYRHNYLVPTVKQGNYASLLESTSTHWGFVPVSE.

Histidine 229 serves as a coordination point for Zn(2+). Glutamate 230 is a catalytic residue. Zn(2+)-binding residues include histidine 233 and glutamate 269. Cysteines 437 and 453 form a disulfide. Residues 450–865 (TLDCRELLVK…LLKDIINEYF (416 aa)) are translocation domain (TD). The segment at 490–541 (YYPDNVSVDQVILSKNTSEHGQLDLLYPSIDSESEILPGENQVFYDNRTQNV) is belt. The interval 866–1093 (NNINDSKILS…DINILFNSLQ (228 aa)) is N-terminus of receptor binding domain (N-RBD). The interval 1094–1291 (YTNVVKDYWG…THWGFVPVSE (198 aa)) is C-terminus of receptor binding domain (C-RBD). A ganglioside GD1a (d18:1(4E)) is bound at residue tyrosine 1119. A ganglioside GD1b (d18:1(4E)) contacts are provided by residues 1126 to 1129 (ANSR) and tyrosine 1146. Residue 1247–1250 (IGTY) participates in a ganglioside GD1a (d18:1(4E)) binding. The short motif at 1256-1258 (GDW) is the Host ganglioside-binding motif element. Positions 1269 to 1283 (KQGNYASLLESTSTH) are ganglioside-binding loop. Residue serine 1281 coordinates a ganglioside GD1a (d18:1(4E)).

The protein belongs to the peptidase M27 family. Heterodimer; disulfide-linked heterodimer of a light chain (LC) and a heavy chain (HC). The LC has the proteolytic/pharmacological activity. The N- and C-terminal of the HC mediate channel formation and toxin binding, respectively. Can also be purified in complex with a non-toxic component that is larger than the HC. The stoichiometry of the whole complex has been modeled as one BoNT/C, one NTNHA, three HA-70, six HA-33 and three HA-17. Zn(2+) is required as a cofactor.

It is found in the secreted. The enzyme catalyses Limited hydrolysis of proteins of the neuroexocytosis apparatus, synaptobrevins, SNAP25 or syntaxin. No detected action on small molecule substrates.. Its activity is regulated as follows. 1,10-phenanthroline, EDTA and partially captopril block cleavage of syntaxin in brain synaptosomes. Treatment of synaptosomes with a mild detergent also inhibits cleavage. 1,10-phenanthroline partially antagonizes inhibitions of neurotransmitter release. Botulinum toxin causes flaccid paralysis by inhibiting neurotransmitter (acetylcholine) release from the presynaptic membranes of nerve terminals of the eukaryotic host skeletal and autonomic nervous system, with frequent heart or respiratory failure. Is unique among characterized BoNTs in having 2 substrates, syntaxin (STX) and SNAP25. Precursor of botulinum neurotoxin C which unlike most BoNTs seems not to have a proteinaceous coreceptor, and instead recognizes 2 different complex polysialylated gangliosides found on neural tissue probably found in synaptic vesicles. Upon synaptic vesicle recycling the toxin is taken up via the endocytic pathway. When the pH of the toxin-containing endosome drops a structural rearrangement occurs so that the N-terminus of the heavy chain (HC) forms pores that allows the light chain (LC) to translocate into the cytosol. Once in the cytosol the disulfide bond linking the 2 subunits is reduced and LC cleaves its target protein on synaptic vesicles, preventing their fusion with the cytoplasmic membrane and thus neurotransmitter release. In vitro the whole toxin only has protease activity after reduction. Electrical stimulation increases uptake of toxin, presumably by transiently exposing a receptor usually found in eukaryotic target synaptic vesicles. Forms ion-conducting channels at around pH 6.1. Requires complex eukaryotic host polysialogangliosides for full neurotoxicity. Synaptic vesicle glycoproteins (SV2) do not seem to act as its receptor. Its function is as follows. Has proteolytic activity. After translocation into the eukaryotic host cytosol, inhibits neurotransmitter release by acting as a zinc endopeptidase that cleaves syntaxin-1A/STX1A and syntaxin-1B/STX1B. Cleaves the '253-Arg-|-Ala-254' bond of STX1 and the '252-Arg-|-Ala-253' bond of STX2; also acts on syntaxin 3 (STX3) but not 4 (STX4). Cleaves the '198-Arg-|-Ala-199' bond of SNAP25. Recognizes the '93-Asn--Met-202' region of SNAP25. Functionally, responsible for host epithelial cell transcytosis, host nerve cell targeting and translocation of light chain (LC) into eukaryotic host cytosol. Composed of 3 subdomains; the translocation domain (TD), and N-terminus and C-terminus of the receptor-binding domain (RBD). The RBD is responsible for the adherence of the toxin to the eukaryotic target cell surface. It simultaneously recognizes 2 polysialated gangliosides coreceptors in close proximity on host synaptic vesicles. The N-terminus of the TD wraps an extended belt around the perimeter of the LC, protecting Zn(2+) in the active site; it may also prevent premature LC dissociation from the translocation channel and protect toxin prior to translocation. The TD inserts into synaptic vesicle membrane to allow translocation into the host cytosol. The C-terminal half of the HC (residues 864-1291) binds neurons in a dose-dependent manner. The C-terminal half of the HC (residues 863-1291) binds eukaryotic host gangliosides in the order GD1b &gt; GT1b &gt; GD1a &gt; GM1a. Has 2 ganglioside binding sites; Sia-1 prefers a sia7 sialic acid and sugars within the ganglioside (GD1b &gt; GT1b), whereas GBP2 recognizes a sia5 sialic acid (GT1b and GD1a). Both sites are required for HC to enter neurons, acting via different gangliosides. This suggests that 2 gangliosides serve as toxin receptors. Synaptic activity (depolarization with K(+)) increases uptake by neurons. Treatment of synaptosomes with proteinase K does not reduce HC binding, suggesting there is no protein receptor or it is protected from extracellular proteases. Decreases uptake and toxicity of whole BoNT/A, but also interferes with uptake of BoNT/E and BoNT/F. HC also binds phosphoinositides, which might play a role in membrane-binding. This is Botulinum neurotoxin type C from Clostridium botulinum C phage (Clostridium botulinum C bacteriophage).